The following is a 141-amino-acid chain: MWVLGIAATFCGLFWLPGLALQIQCYQCEEFQLNNDCSSPEFIVNCTVNVQDMCQKEVMEQSAGIMYRKSCASSAACLIASAGYQSFCSPGKLNSVCISCCNTPLCNGPRPKKRGSSASAIRPELFTTVLFFNLALCLAHC.

A signal peptide spans 1–20; sequence MWVLGIAATFCGLFWLPGLA. 6 disulfide bridges follow: cysteine 25-cysteine 54, cysteine 28-cysteine 37, cysteine 46-cysteine 71, cysteine 77-cysteine 100, cysteine 88-cysteine 97, and cysteine 101-cysteine 106. The 84-residue stretch at 25 to 108 folds into the UPAR/Ly6 domain; the sequence is CYQCEEFQLN…SCCNTPLCNG (84 aa). Residue asparagine 45 is glycosylated (N-linked (GlcNAc...) asparagine). Glycine 115 is lipidated: GPI-anchor amidated glycine. Residues 116 to 141 constitute a propeptide, removed in mature form; that stretch reads SSASAIRPELFTTVLFFNLALCLAHC.

As to quaternary structure, interacts with CHRNA4 and nAChRs containing alpha-4:beta-2 (CHRNA4:CHRNB2) and alpha-7 (CHRNA7) subunits.

The protein localises to the cell membrane. Functionally, believed to act as a modulator of nicotinic acetylcholine receptors (nAChRs) activity. In vitro increases receptor desensitization and decreases affinity for ACh of alpha-4:beta-2-containing nAChRs. May play a role in the intracellular trafficking of alpha-4:beta-2 and alpha-7-containing nAChRs and may inhibit their expression at the cell surface. May be involved in the control of anxiety. This chain is Ly6/PLAUR domain-containing protein 1 (Lypd1), found in Rattus norvegicus (Rat).